A 373-amino-acid chain; its full sequence is Cytoplasmic envelopment protein 2 (373 aa).

The segment at 1–35 is disordered; it reads MAQLGPRRPLAPPGPPGTLPRPDSRAGARGTRDRV. A compositionally biased stretch (pro residues) spans 9 to 19; the sequence is PLAPPGPPGTL. A compositionally biased stretch (basic and acidic residues) spans 22-35; that stretch reads PDSRAGARGTRDRV.

This sequence belongs to the herpesviridae cytoplasmic envelopment protein 2 family. In terms of assembly, interacts with cytoplasmic envelopment protein 3 and with the capsid.

It is found in the virion tegument. It localises to the host cytoplasm. The protein resides in the host nucleus. In terms of biological role, plays a critical role in cytoplasmic virus egress. Participates in the final step of tegumentation and envelope acquisition within the host cytoplasm by directly interacting with the capsid. Upon virion binding to target cell, a signaling cascade is triggered to disrupt the interaction with the capsid, thereby preparing capsid uncoating. This chain is Cytoplasmic envelopment protein 2 (UL16), found in Homo sapiens (Human).